A 625-amino-acid polypeptide reads, in one-letter code: MAKQVQNFNAEIKQLLDIVIHSLYSHKEIFLRELLSNASDAIDKLKFNSLTHPSLLPENWQPAIRLEPNSETKTLKIIDNGIGMTQEEVVEFIGTIARSGAKAFMQMNAEMKTKPELIGQFGVGFYSAFMVADRVTLHTQKAGSNDGTVWESMGDGTYSLDSVPRPEGTGTTITLHMKDFKEEDEVQNFTDKWVLKSLVKKYSDFIAHPIKMMGETEEETLNSQKALWLKSPSEVTKEEYKEFYQHLTHDWNEPLRTVHYRAEGTMEFNALLYVPGKKPWNYNMRDMEYGLSLYIKRVFIMADCKDLLPPYLRFVKGLVDSSDLSLNVSRELLQQDRQVTQIRKNVTNKALSTLKDLLTKERSAYEDFWTEFGATLKEGLPSDAANKEKLQDLLLFHSTSSDKMTTMDEYVARMKETQKDIYYITGDSLSQVSNSPYLEKLKEKGFEVLLLVDPVDEWVVDALSEFKGKKLQSIMREGLDLDTAEEKQQKEQEKKQAEVTLKPVLESMKKTLESDVKDVVLSDRLTNTPACLVASSADPSAHMQKLMAQMGKEYAGQQVKRIMEINPNHPVFEKMLKASPEQQTKWAEILYAQALLTEGSNLPDPVKFSQQIAELMVQAADSTKH.

The a; substrate-binding stretch occupies residues 1-330; it reads MAKQVQNFNA…SSDLSLNVSR (330 aa). The b stretch occupies residues 331–545; it reads ELLQQDRQVT…SADPSAHMQK (215 aa). The tract at residues 546–625 is c; the sequence is LMAQMGKEYA…MVQAADSTKH (80 aa).

This sequence belongs to the heat shock protein 90 family. As to quaternary structure, homodimer.

The protein resides in the cytoplasm. In terms of biological role, molecular chaperone. Has ATPase activity. This is Chaperone protein HtpG from Bdellovibrio bacteriovorus (strain ATCC 15356 / DSM 50701 / NCIMB 9529 / HD100).